Here is a 712-residue protein sequence, read N- to C-terminus: Small ribosomal subunit protein uS3c (712 aa).

Residues 1–118 (MGQKVHPLGF…IKVSKDLVTN (118 aa)) form an S3-like 1st part region. The tract at residues 119–580 (LQKTRKYLFK…LQTAFLTQIE (462 aa)) is intervening sequence (IVS). An S3-like 2nd part region spans residues 581-712 (SQRKMYKANL…VWIFKGYSKI (132 aa)).

The protein belongs to the universal ribosomal protein uS3 family. Part of the 30S ribosomal subunit.

The protein resides in the plastid. The protein localises to the chloroplast. The sequence is that of Small ribosomal subunit protein uS3c (rps3) from Chlamydomonas reinhardtii (Chlamydomonas smithii).